We begin with the raw amino-acid sequence, 376 residues long: N-acetyldiaminopimelate deacetylase (376 aa).

Residue Asp69 is part of the active site. Glu128 acts as the Proton acceptor in catalysis.

This sequence belongs to the peptidase M20A family. N-acetyldiaminopimelate deacetylase subfamily.

It carries out the reaction N-acetyl-(2S,6S)-2,6-diaminopimelate + H2O = (2S,6S)-2,6-diaminopimelate + acetate. It participates in amino-acid biosynthesis; L-lysine biosynthesis via DAP pathway; LL-2,6-diaminopimelate from (S)-tetrahydrodipicolinate (acetylase route): step 3/3. Functionally, catalyzes the conversion of N-acetyl-diaminopimelate to diaminopimelate and acetate. The sequence is that of N-acetyldiaminopimelate deacetylase from Bacillus thuringiensis subsp. konkukian (strain 97-27).